The following is a 149-amino-acid chain: Large ribosomal subunit protein bL20m (149 aa).

A mitochondrion-targeting transit peptide spans 1 to 9; that stretch reads MVFLSLSRW.

It belongs to the bacterial ribosomal protein bL20 family. In terms of assembly, component of the mitochondrial ribosome large subunit (39S) which comprises a 16S rRNA and about 50 distinct proteins.

The protein resides in the mitochondrion. The polypeptide is Large ribosomal subunit protein bL20m (mrpl20) (Xenopus laevis (African clawed frog)).